Reading from the N-terminus, the 515-residue chain is Maturase K (515 aa).

The protein belongs to the intron maturase 2 family. MatK subfamily.

Its subcellular location is the plastid. It localises to the chloroplast. Usually encoded in the trnK tRNA gene intron. Probably assists in splicing its own and other chloroplast group II introns. The polypeptide is Maturase K (Pinus pumila (Dwarf Siberian pine)).